Reading from the N-terminus, the 293-residue chain is Phosphatidate cytidylyltransferase (293 aa).

8 helical membrane-spanning segments follow: residues 6 to 26, 51 to 71, 73 to 93, 97 to 117, 157 to 177, 195 to 215, 218 to 238, and 273 to 293; these read IISA…GGWY, IAPA…SATV, PHLT…YLLF, MATI…GYLP, LLVT…AYIM, VEGS…GAWY, WPYW…VSLL, and VFTA…LNNL.

It belongs to the CDS family.

The protein localises to the cell membrane. It catalyses the reaction a 1,2-diacyl-sn-glycero-3-phosphate + CTP + H(+) = a CDP-1,2-diacyl-sn-glycerol + diphosphate. Its pathway is phospholipid metabolism; CDP-diacylglycerol biosynthesis; CDP-diacylglycerol from sn-glycerol 3-phosphate: step 3/3. This chain is Phosphatidate cytidylyltransferase (cdsA), found in Synechocystis sp. (strain ATCC 27184 / PCC 6803 / Kazusa).